The following is a 357-amino-acid chain: S-adenosylmethionine:tRNA ribosyltransferase-isomerase (357 aa).

This sequence belongs to the QueA family. In terms of assembly, monomer.

The protein localises to the cytoplasm. The enzyme catalyses 7-aminomethyl-7-carbaguanosine(34) in tRNA + S-adenosyl-L-methionine = epoxyqueuosine(34) in tRNA + adenine + L-methionine + 2 H(+). It functions in the pathway tRNA modification; tRNA-queuosine biosynthesis. Its function is as follows. Transfers and isomerizes the ribose moiety from AdoMet to the 7-aminomethyl group of 7-deazaguanine (preQ1-tRNA) to give epoxyqueuosine (oQ-tRNA). The polypeptide is S-adenosylmethionine:tRNA ribosyltransferase-isomerase (Phenylobacterium zucineum (strain HLK1)).